We begin with the raw amino-acid sequence, 359 residues long: Peptide chain release factor 1 (359 aa).

Gln-236 carries the N5-methylglutamine modification.

This sequence belongs to the prokaryotic/mitochondrial release factor family. In terms of processing, methylated by PrmC. Methylation increases the termination efficiency of RF1.

It localises to the cytoplasm. Its function is as follows. Peptide chain release factor 1 directs the termination of translation in response to the peptide chain termination codons UAG and UAA. The chain is Peptide chain release factor 1 from Streptococcus pyogenes serotype M6 (strain ATCC BAA-946 / MGAS10394).